We begin with the raw amino-acid sequence, 105 residues long: UPF0235 protein Mchl_2407 (105 aa).

It belongs to the UPF0235 family.

The chain is UPF0235 protein Mchl_2407 from Methylorubrum extorquens (strain CM4 / NCIMB 13688) (Methylobacterium extorquens).